Consider the following 1040-residue polypeptide: Isoleucine--tRNA ligase (1040 aa).

The short motif at 47 to 57 (PYCSGSIHLGT) is the 'HIGH' region element. The 'KMSKS' region signature appears at 605-609 (KMSKS). Residue Lys-608 coordinates ATP.

Belongs to the class-I aminoacyl-tRNA synthetase family. IleS type 2 subfamily. As to quaternary structure, monomer. Requires Zn(2+) as cofactor.

It is found in the cytoplasm. It carries out the reaction tRNA(Ile) + L-isoleucine + ATP = L-isoleucyl-tRNA(Ile) + AMP + diphosphate. Its function is as follows. Catalyzes the attachment of isoleucine to tRNA(Ile). As IleRS can inadvertently accommodate and process structurally similar amino acids such as valine, to avoid such errors it has two additional distinct tRNA(Ile)-dependent editing activities. One activity is designated as 'pretransfer' editing and involves the hydrolysis of activated Val-AMP. The other activity is designated 'posttransfer' editing and involves deacylation of mischarged Val-tRNA(Ile). The sequence is that of Isoleucine--tRNA ligase from Methanococcus aeolicus (strain ATCC BAA-1280 / DSM 17508 / OCM 812 / Nankai-3).